Here is a 126-residue protein sequence, read N- to C-terminus: MTRIRRGYIARRRRTKIRLFASSFRGAHSRLTRTITQQKIRALVSAHRDRDKQKINFRRLWITRINAAIRERGVCYSYSRLINGLYKRQLLLNRKILAQIAISNRNCLYMISNEIIKEVGWKESTG.

It belongs to the bacterial ribosomal protein bL20 family.

The protein localises to the plastid. The protein resides in the chloroplast. In terms of biological role, binds directly to 23S ribosomal RNA and is necessary for the in vitro assembly process of the 50S ribosomal subunit. It is not involved in the protein synthesizing functions of that subunit. This is Large ribosomal subunit protein bL20c from Lactuca sativa (Garden lettuce).